Here is a 615-residue protein sequence, read N- to C-terminus: Proteasome-associated ATPase (615 aa).

A compositionally biased stretch (basic and acidic residues) spans 1 to 13 (MSESQRHEAREDG). The tract at residues 1–32 (MSESQRHEAREDGFTTPHESGLSSEDAAELEE) is disordered. The stretch at 22–100 (LSSEDAAELE…LREEVDRLGQ (79 aa)) forms a coiled coil. Position 302–307 (302–307 (GCGKTL)) interacts with ATP. The docks into pockets in the proteasome alpha-ring stretch occupies residues 614–615 (YL).

It belongs to the AAA ATPase family. In terms of assembly, homohexamer. Assembles into a hexameric ring structure that caps the 20S proteasome core. Strongly interacts with the prokaryotic ubiquitin-like protein Pup through a hydrophobic interface; the interacting region of ARC lies in its N-terminal coiled-coil domain. There is one Pup binding site per ARC hexamer ring. Upon ATP-binding, the C-terminus of ARC interacts with the alpha-rings of the proteasome core, possibly by binding to the intersubunit pockets.

The protein operates within protein degradation; proteasomal Pup-dependent pathway. In terms of biological role, ATPase which is responsible for recognizing, binding, unfolding and translocation of pupylated proteins into the bacterial 20S proteasome core particle. May be essential for opening the gate of the 20S proteasome via an interaction with its C-terminus, thereby allowing substrate entry and access to the site of proteolysis. Thus, the C-termini of the proteasomal ATPase may function like a 'key in a lock' to induce gate opening and therefore regulate proteolysis. This chain is Proteasome-associated ATPase, found in Mycobacterium sp. (strain JLS).